The sequence spans 270 residues: METKPYLIALDLDGTLLKDDKTISENTLHTIQRLKDDGHYVCISTGRPYRSSSMYYQQMELTTPIVNFNGAFVHHPQDDSWGRYHTSLPLDVVKQLVDISESYNVHNVLAEVIDDVYFHYHDEHLIDAFNMNTTNVTVGDLRENLGEDVTSVLIHAKEEDVPAIRSYLSDVHAEVIDHRRWAAPWHVIEIIKSGMNKAVGLQKISDYYGVPRERIIAFGDEDNDLEMLEFAGCGVAMGNGIDAVKQIANRTTATNEEDGVARFLKEYFSL.

Asp-11 functions as the Nucleophile in the catalytic mechanism. Asp-11 is a Mg(2+) binding site. Residue Leu-12 coordinates phosphate. Asp-13 contributes to the Mg(2+) binding site. Phosphate is bound by residues Thr-45–Gly-46 and Lys-197. Asp-220 serves as a coordination point for Mg(2+). Asn-223 serves as a coordination point for phosphate.

This sequence belongs to the HAD-like hydrolase superfamily. Cof family. Mg(2+) is required as a cofactor.

The enzyme catalyses 5-amino-6-(5-phospho-D-ribitylamino)uracil + H2O = 5-amino-6-(D-ribitylamino)uracil + phosphate. The protein operates within cofactor biosynthesis; riboflavin biosynthesis; 5-amino-6-(D-ribitylamino)uracil from GTP: step 4/4. Functionally, catalyzes the dephosphorylation of the riboflavin precursor 5-amino-6-(5-phospho-D-ribitylamino)uracil and of flavin mononucleotide (FMN) in vitro. The chain is 5-amino-6-(5-phospho-D-ribitylamino)uracil phosphatase YitU (yitU) from Bacillus subtilis (strain 168).